Here is a 216-residue protein sequence, read N- to C-terminus: Large ribosomal subunit protein uL3 (216 aa).

The tract at residues 134–153 (RATHGNSRSHNVPGSIGMAQ) is disordered. Position 153 is an N5-methylglutamine (glutamine 153).

The protein belongs to the universal ribosomal protein uL3 family. Part of the 50S ribosomal subunit. Forms a cluster with proteins L14 and L19. Methylated by PrmB.

Functionally, one of the primary rRNA binding proteins, it binds directly near the 3'-end of the 23S rRNA, where it nucleates assembly of the 50S subunit. The polypeptide is Large ribosomal subunit protein uL3 (Cupriavidus pinatubonensis (strain JMP 134 / LMG 1197) (Cupriavidus necator (strain JMP 134))).